We begin with the raw amino-acid sequence, 357 residues long: Probable cinnamyl alcohol dehydrogenase (357 aa).

Cys-47 contributes to the Zn(2+) binding site. Residue Ser-49 coordinates NADP(+). Zn(2+) contacts are provided by His-69, Glu-70, Cys-100, Cys-103, Cys-106, Cys-114, and Cys-163. Residues Thr-167, 188–193 (GLGGVG), 211–216 (SSSDKK), Thr-251, Gly-275, and 298–300 (SFI) contribute to the NADP(+) site.

This sequence belongs to the zinc-containing alcohol dehydrogenase family. Homodimer. Requires Zn(2+) as cofactor.

It catalyses the reaction (E)-cinnamyl alcohol + NADP(+) = (E)-cinnamaldehyde + NADPH + H(+). It carries out the reaction (E)-coniferol + NADP(+) = (E)-coniferaldehyde + NADPH + H(+). The enzyme catalyses (E)-sinapyl alcohol + NADP(+) = (E)-sinapaldehyde + NADPH + H(+). The catalysed reaction is (E)-4-coumaroyl alcohol + NADP(+) = (E)-4-coumaraldehyde + NADPH + H(+). It catalyses the reaction (E)-caffeyl alcohol + NADP(+) = (E)-caffeyl aldehyde + NADPH + H(+). The protein operates within aromatic compound metabolism; phenylpropanoid biosynthesis. In terms of biological role, involved in lignin biosynthesis. Catalyzes the final step specific for the production of lignin monomers. Catalyzes the NADPH-dependent reduction of coniferaldehyde, 5-hydroxyconiferaldehyde, sinapaldehyde, 4-coumaraldehyde and caffeyl aldehyde to their respective alcohols. This Pinus radiata (Monterey pine) protein is Probable cinnamyl alcohol dehydrogenase (CAD).